The chain runs to 160 residues: MSKTSIGLDKVQSAELADKLNELLATYQVFYTNVRGYHWNIKGVNFFALHAKFEEIYTNLVARVDEVAERILTLGYTPNNAYSQYLKISRIKEDIAVSEAQECLSGTLQGLKTLLDQQREILAFANNANDEGTASQMSDYIKEQEKLVWMFQAACQTCHN.

This sequence belongs to the Dps family.

This is an uncharacterized protein from Haemophilus influenzae (strain ATCC 51907 / DSM 11121 / KW20 / Rd).